Here is a 379-residue protein sequence, read N- to C-terminus: DNA replication and repair protein RecF (379 aa).

Residue 30–37 (GKNAQGKT) participates in ATP binding.

Belongs to the RecF family.

The protein resides in the cytoplasm. Functionally, the RecF protein is involved in DNA metabolism; it is required for DNA replication and normal SOS inducibility. RecF binds preferentially to single-stranded, linear DNA. It also seems to bind ATP. The polypeptide is DNA replication and repair protein RecF (Ligilactobacillus salivarius (strain UCC118) (Lactobacillus salivarius)).